Reading from the N-terminus, the 291-residue chain is ATP synthase subunit a (291 aa).

Transmembrane regions (helical) follow at residues Phe51 to Val71, Phe117 to Ile137, His146 to Phe166, Phe173 to Leu193, Met213 to Met233, and Phe239 to Val259.

It belongs to the ATPase A chain family. In terms of assembly, F-type ATPases have 2 components, CF(1) - the catalytic core - and CF(0) - the membrane proton channel. CF(1) has five subunits: alpha(3), beta(3), gamma(1), delta(1), epsilon(1). CF(0) has three main subunits: a, b and c.

The protein localises to the mitochondrion inner membrane. Mitochondrial membrane ATP synthase (F(1)F(0) ATP synthase or Complex V) produces ATP from ADP in the presence of a proton gradient across the membrane which is generated by electron transport complexes of the respiratory chain. F-type ATPases consist of two structural domains, F(1) - containing the extramembraneous catalytic core and F(0) - containing the membrane proton channel, linked together by a central stalk and a peripheral stalk. During catalysis, ATP synthesis in the catalytic domain of F(1) is coupled via a rotary mechanism of the central stalk subunits to proton translocation. Key component of the proton channel; it may play a direct role in the translocation of protons across the membrane. This chain is ATP synthase subunit a (ATP6), found in Vicia faba (Broad bean).